A 241-amino-acid chain; its full sequence is Phosducin-like protein 2 (241 aa).

The Phosducin domain occupies 34–202 (VLRLQKEAMV…EWKLAEVGAI (169 aa)). The tract at residues 89-241 (FGELREISGN…DSSNSDNDTK (153 aa)) is thioredoxin fold.

Belongs to the phosducin family. In terms of assembly, interacts with the CCT chaperonin complex and actin. In terms of tissue distribution, testis-specific.

The protein localises to the endoplasmic reticulum. Functionally, essential for male fertility, spermiogenesis and acrosome formation. The polypeptide is Phosducin-like protein 2 (PDCL2) (Homo sapiens (Human)).